Reading from the N-terminus, the 431-residue chain is MTKQIMPITLSYEPAAACWGEKALISSSEQGVMVHLVGKGKLGAVQRAGRKIDGQGIRHVALVGEGWDLEKSWAFWQGFRAPKGNRSIEWPQLPAAEKQELESRIKIIDWVRDTINMSAEELGPEQLAKRAIDLMCGMACESVSYRIIKGEDLREQGYTGIHTVGRGSSRDPILLALDYNPTGNPQAPVFACLVGKGVTFDTGGYSLKQSSFMDSMKSDMGGAATLTGALALAISRGLKQRVKLFLCIADNMVSGNAFKLGDVIHYRNGKSVEVMNTDAEGRLVLADGLIDASKEKAKLIIDAATLTGAAKTAVGNDYHSVLSFDDKLADDLLTAAASENELFWRLPLAEFHRSQLPSNFADLNNVAASPHTAGASTAAAFLSHFVEEYQKGWIHIDCSATYRKSAVEHWSAGATGYGVRSIANLLLAKAK.

Residues Lys196 and Asp201 each coordinate Mn(2+). Residue Lys208 is part of the active site. Asp219, Asp278, and Glu280 together coordinate Mn(2+). Arg282 is an active-site residue.

It belongs to the peptidase M17 family. Homohexamer. Mn(2+) is required as a cofactor.

Its subcellular location is the cytoplasm. It catalyses the reaction Release of an N-terminal amino acid, Xaa, from a peptide or arylamide. Xaa is preferably Glu or Asp but may be other amino acids, including Leu, Met, His, Cys and Gln.. Probably plays an important role in intracellular peptide degradation. In Photorhabdus laumondii subsp. laumondii (strain DSM 15139 / CIP 105565 / TT01) (Photorhabdus luminescens subsp. laumondii), this protein is Peptidase B.